Reading from the N-terminus, the 87-residue chain is Neurotoxin Cex4 (87 aa).

The first 19 residues, 1-19 (MNSLLMITACLFLIGTVWA), serve as a signal peptide directing secretion. Residues 20–85 (KEGYLVNKST…TYPLPNKSCG (66 aa)) form the LCN-type CS-alpha/beta domain. Intrachain disulfides connect cysteine 31/cysteine 84, cysteine 35/cysteine 60, cysteine 44/cysteine 65, and cysteine 48/cysteine 67. Cysteine 84 is modified (cysteine amide). Positions 85 to 87 (GRK) are excised as a propeptide.

The protein belongs to the long (4 C-C) scorpion toxin superfamily. Sodium channel inhibitor family. Beta subfamily. In terms of tissue distribution, expressed by the venom gland.

Its subcellular location is the secreted. Functionally, beta toxins bind voltage-independently at site-4 of sodium channels (Nav) and shift the voltage of activation toward more negative potentials thereby affecting sodium channel activation and promoting spontaneous and repetitive firing. The sequence is that of Neurotoxin Cex4 from Centruroides exilicauda (Bark scorpion).